Consider the following 130-residue polypeptide: Holin-like protein CidA (130 aa).

The next 4 helical transmembrane spans lie at 6–26, 31–51, 65–85, and 93–113; these read FVIKLILQLALIMLITFIGTE, LHIPLAGSIVGLMLFFLLLQF, FLLKTMVFFFIPSVVGIMDVA, and ILFFIVIIIGTCLVALSSGYI.

Belongs to the CidA/LrgA family. CidA subfamily.

The protein resides in the cell membrane. In terms of biological role, increases the activity of extracellular murein hydrolases possibly by mediating their export via hole formation. Inhibited by the antiholin-like proteins LrgAB. In an unstressed cell, the LrgAB products probably inhibit the function of the CidAB proteins. When a cell is stressed by the addition of antibiotics or by other factors in the environment, the CidAB proteins possibly oligomerize within the bacterial cell membrane, creating lesions that disrupt the proton motive force, which in turn results in loss of cell viability. These lesions are also hypothesized to regulate the subsequent cell lysis by either allowing the murein hydrolases access to the cell wall substrate and/or regulating their activity by a possible change in the cell wall pH that results from loss of membrane potential. The polypeptide is Holin-like protein CidA (Staphylococcus epidermidis (strain ATCC 35984 / DSM 28319 / BCRC 17069 / CCUG 31568 / BM 3577 / RP62A)).